Reading from the N-terminus, the 156-residue chain is MPRRREVPKREILPDPKFGSQDVSKFINVIMQAGKKSVAERIVYGAFAQISGKAGKDPLEVFSSAVANVKPVVEVKSRRVGGANYQVPVEVRPSRRMALSMRWLREAARKRAEKSMAQRLAGELLEAAEGRGSAMKKREEVHRMAEANKAFSHYRF.

It belongs to the universal ribosomal protein uS7 family. Part of the 30S ribosomal subunit. Contacts proteins S9 and S11.

Its function is as follows. One of the primary rRNA binding proteins, it binds directly to 16S rRNA where it nucleates assembly of the head domain of the 30S subunit. Is located at the subunit interface close to the decoding center, probably blocks exit of the E-site tRNA. The polypeptide is Small ribosomal subunit protein uS7 (Aromatoleum aromaticum (strain DSM 19018 / LMG 30748 / EbN1) (Azoarcus sp. (strain EbN1))).